The chain runs to 241 residues: Demethylmenaquinone methyltransferase (241 aa).

S-adenosyl-L-methionine contacts are provided by threonine 73 and aspartate 92.

Belongs to the class I-like SAM-binding methyltransferase superfamily. MenG/UbiE family.

It catalyses the reaction a 2-demethylmenaquinol + S-adenosyl-L-methionine = a menaquinol + S-adenosyl-L-homocysteine + H(+). The protein operates within quinol/quinone metabolism; menaquinone biosynthesis; menaquinol from 1,4-dihydroxy-2-naphthoate: step 2/2. Its function is as follows. Methyltransferase required for the conversion of demethylmenaquinol (DMKH2) to menaquinol (MKH2). The chain is Demethylmenaquinone methyltransferase from Chlorobaculum parvum (strain DSM 263 / NCIMB 8327) (Chlorobium vibrioforme subsp. thiosulfatophilum).